The sequence spans 631 residues: 1-deoxy-D-xylulose-5-phosphate synthase (631 aa).

Residues His76 and 117-119 (AHS) each bind thiamine diphosphate. Asp148 serves as a coordination point for Mg(2+). Residues 149-150 (GA), Asn177, Tyr284, and Glu365 contribute to the thiamine diphosphate site. Asn177 serves as a coordination point for Mg(2+).

This sequence belongs to the transketolase family. DXPS subfamily. Homodimer. It depends on Mg(2+) as a cofactor. The cofactor is thiamine diphosphate.

It catalyses the reaction D-glyceraldehyde 3-phosphate + pyruvate + H(+) = 1-deoxy-D-xylulose 5-phosphate + CO2. Its pathway is metabolic intermediate biosynthesis; 1-deoxy-D-xylulose 5-phosphate biosynthesis; 1-deoxy-D-xylulose 5-phosphate from D-glyceraldehyde 3-phosphate and pyruvate: step 1/1. In terms of biological role, catalyzes the acyloin condensation reaction between C atoms 2 and 3 of pyruvate and glyceraldehyde 3-phosphate to yield 1-deoxy-D-xylulose-5-phosphate (DXP). In Methylibium petroleiphilum (strain ATCC BAA-1232 / LMG 22953 / PM1), this protein is 1-deoxy-D-xylulose-5-phosphate synthase.